We begin with the raw amino-acid sequence, 366 residues long: Heat-inducible transcription repressor HrcA (366 aa).

Over residues 298–309 (SSGYGQSSTPSA) the composition is skewed to polar residues. A disordered region spans residues 298–318 (SSGYGQSSTPSANVEHEEYDT).

It belongs to the HrcA family.

Negative regulator of class I heat shock genes (grpE-dnaK-dnaJ and groELS operons). Prevents heat-shock induction of these operons. The chain is Heat-inducible transcription repressor HrcA from Bifidobacterium animalis subsp. lactis (strain AD011).